The sequence spans 265 residues: uncharacterized protein (265 aa).

The tract at residues 122–145 (THYRDNGQTPPRDTRPHGGISLGG) is disordered.

This is an uncharacterized protein from Zymomonas mobilis subsp. mobilis (strain ATCC 31821 / ZM4 / CP4).